The following is a 231-amino-acid chain: NADH-ubiquinone oxidoreductase chain 4 (231 aa).

6 consecutive transmembrane segments (helical) span residues 1 to 21, 34 to 54, 63 to 85, 89 to 111, 128 to 148, and 156 to 176; these read PIAG…YGII, MFLP…LTCL, IAYS…TPWG, AMAL…NTTY, ILPM…AVPP, and LLIM…LGLS.

The protein belongs to the complex I subunit 4 family.

It localises to the mitochondrion membrane. It carries out the reaction a ubiquinone + NADH + 5 H(+)(in) = a ubiquinol + NAD(+) + 4 H(+)(out). Its function is as follows. Core subunit of the mitochondrial membrane respiratory chain NADH dehydrogenase (Complex I) that is believed to belong to the minimal assembly required for catalysis. Complex I functions in the transfer of electrons from NADH to the respiratory chain. The immediate electron acceptor for the enzyme is believed to be ubiquinone. The polypeptide is NADH-ubiquinone oxidoreductase chain 4 (MT-ND4) (Agkistrodon contortrix contortrix (Southern copperhead)).